A 354-amino-acid polypeptide reads, in one-letter code: Protein ECM8 (354 aa).

Functionally, may be involved in cell wall organization and biogenesis. In Saccharomyces cerevisiae (strain ATCC 204508 / S288c) (Baker's yeast), this protein is Protein ECM8 (ECM8).